Consider the following 361-residue polypeptide: GTPase Obg (361 aa).

One can recognise an Obg domain in the interval 1–159; the sequence is MKFVDEAFID…KNLKLELKVL (159 aa). Residues 160–334 form the OBG-type G domain; it reads ADVGLLGMPN…LIKTIYQHVK (175 aa). GTP is bound by residues 166–173, 191–195, 213–216, 284–287, and 315–317; these read GMPNAGKS, FTTLH, DLPG, NKLD, and SAL. 2 residues coordinate Mg(2+): serine 173 and threonine 193. The interval 339–361 is disordered; it reads SEQPVEEVDPRFVPLPPESPETP. Pro residues predominate over residues 351-361; it reads VPLPPESPETP.

This sequence belongs to the TRAFAC class OBG-HflX-like GTPase superfamily. OBG GTPase family. As to quaternary structure, monomer. Mg(2+) is required as a cofactor.

The protein localises to the cytoplasm. In terms of biological role, an essential GTPase which binds GTP, GDP and possibly (p)ppGpp with moderate affinity, with high nucleotide exchange rates and a fairly low GTP hydrolysis rate. Plays a role in control of the cell cycle, stress response, ribosome biogenesis and in those bacteria that undergo differentiation, in morphogenesis control. This chain is GTPase Obg, found in Polaromonas sp. (strain JS666 / ATCC BAA-500).